The chain runs to 303 residues: Sulfate adenylyltransferase subunit 2 (303 aa).

Belongs to the PAPS reductase family. CysD subfamily. In terms of assembly, heterodimer composed of CysD, the smaller subunit, and CysN.

The enzyme catalyses sulfate + ATP + H(+) = adenosine 5'-phosphosulfate + diphosphate. The protein operates within sulfur metabolism; hydrogen sulfide biosynthesis; sulfite from sulfate: step 1/3. In terms of biological role, with CysN forms the ATP sulfurylase (ATPS) that catalyzes the adenylation of sulfate producing adenosine 5'-phosphosulfate (APS) and diphosphate, the first enzymatic step in sulfur assimilation pathway. APS synthesis involves the formation of a high-energy phosphoric-sulfuric acid anhydride bond driven by GTP hydrolysis by CysN coupled to ATP hydrolysis by CysD. The polypeptide is Sulfate adenylyltransferase subunit 2 (Sulfurovum sp. (strain NBC37-1)).